The primary structure comprises 372 residues: UDP-N-acetylglucosamine--N-acetylmuramyl-(pentapeptide) pyrophosphoryl-undecaprenol N-acetylglucosamine transferase (372 aa).

UDP-N-acetyl-alpha-D-glucosamine is bound by residues 16–18 (TGG), Asn-128, Arg-164, Ser-192, Ile-250, and Gln-295.

Belongs to the glycosyltransferase 28 family. MurG subfamily.

It is found in the cell inner membrane. The catalysed reaction is di-trans,octa-cis-undecaprenyl diphospho-N-acetyl-alpha-D-muramoyl-L-alanyl-D-glutamyl-meso-2,6-diaminopimeloyl-D-alanyl-D-alanine + UDP-N-acetyl-alpha-D-glucosamine = di-trans,octa-cis-undecaprenyl diphospho-[N-acetyl-alpha-D-glucosaminyl-(1-&gt;4)]-N-acetyl-alpha-D-muramoyl-L-alanyl-D-glutamyl-meso-2,6-diaminopimeloyl-D-alanyl-D-alanine + UDP + H(+). Its pathway is cell wall biogenesis; peptidoglycan biosynthesis. In terms of biological role, cell wall formation. Catalyzes the transfer of a GlcNAc subunit on undecaprenyl-pyrophosphoryl-MurNAc-pentapeptide (lipid intermediate I) to form undecaprenyl-pyrophosphoryl-MurNAc-(pentapeptide)GlcNAc (lipid intermediate II). The polypeptide is UDP-N-acetylglucosamine--N-acetylmuramyl-(pentapeptide) pyrophosphoryl-undecaprenol N-acetylglucosamine transferase (Paraburkholderia phytofirmans (strain DSM 17436 / LMG 22146 / PsJN) (Burkholderia phytofirmans)).